The sequence spans 195 residues: Toxin protein Tse4 (195 aa).

The next 4 helical transmembrane spans lie at 20–40 (ASGG…ITLL), 116–136 (YVEL…LFGL), 140–160 (LLAA…GASM), and 171–191 (ALLM…AAYL).

Its subcellular location is the host membrane. The protein localises to the secreted. In terms of biological role, toxin secreted by the H1 type VI (H1-T6SS) secretion system into the periplasm of recipient cells. The protein is Toxin protein Tse4 of Pseudomonas aeruginosa (strain ATCC 15692 / DSM 22644 / CIP 104116 / JCM 14847 / LMG 12228 / 1C / PRS 101 / PAO1).